Here is a 288-residue protein sequence, read N- to C-terminus: Eukaryotic translation initiation factor 3 subunit G (288 aa).

Residues 1-33 (MSRVANNRDWADDEDLEDSNELPQSTTTTNKDG) are disordered. Residues 11 to 20 (ADDEDLEDSN) are compositionally biased toward acidic residues. Positions 21-33 (ELPQSTTTTNKDG) are enriched in polar residues. The RRM domain maps to 208–286 (ATLRVTNVSE…LILRVEFAKK (79 aa)).

It belongs to the eIF-3 subunit G family. In terms of assembly, component of the eukaryotic translation initiation factor 3 (eIF-3) complex.

It localises to the cytoplasm. RNA-binding component of the eukaryotic translation initiation factor 3 (eIF-3) complex, which is involved in protein synthesis of a specialized repertoire of mRNAs and, together with other initiation factors, stimulates binding of mRNA and methionyl-tRNAi to the 40S ribosome. The eIF-3 complex specifically targets and initiates translation of a subset of mRNAs involved in cell proliferation. This subunit can bind 18S rRNA. This is Eukaryotic translation initiation factor 3 subunit G (tif35) from Sclerotinia sclerotiorum (strain ATCC 18683 / 1980 / Ss-1) (White mold).